Consider the following 68-residue polypeptide: KSLFLVLFLGMVSLSICEEEKRENEDEEKQEDDEQSEMKRGLWSTIKNVGKEAAIAAGKAVLGSLGEQ.

The signal sequence occupies residues Lys1–Cys17. Residues Glu18 to Met38 constitute a propeptide that is removed on maturation. The interval Glu19–Arg40 is disordered. Positions Glu25–Gln35 are enriched in acidic residues. Leu65 carries the post-translational modification Leucine amide. Residues Glu67–Gln68 constitute a propeptide that is removed on maturation.

In terms of tissue distribution, expressed by the skin glands.

Its subcellular location is the secreted. Functionally, has antibacterial activity against the Gram-negative bacteria E.coli ATCC 11775 (MIC=0.5 uM), and the Gram-positive bacteria S.aureus ATCC 12600 (MIC=0.5 uM) and M.luteus ATCC 49732 (MIC=2.0 uM). Does not inhibit the growth of the fungus C.albicans. Probably acts by disturbing membrane functions with its amphipathic structure. The chain is Dermaseptin-H5 from Pithecopus azureus (Orange-legged monkey tree frog).